Consider the following 461-residue polypeptide: tRNA (guanine(10)-N(2))-methyltransferase TRMT11 (461 aa).

The protein belongs to the class I-like SAM-binding methyltransferase superfamily. TRM11 methyltransferase family. As to quaternary structure, part of the heterodimeric TRMT11-TRM112 methyltransferase complex; this complex forms an active tRNA methyltransferase, where TRMT112 acts as an activator of the catalytic subunit TRMT11.

It is found in the cytoplasm. It catalyses the reaction guanosine(10) in tRNA + S-adenosyl-L-methionine = N(2)-methylguanosine(10) in tRNA + S-adenosyl-L-homocysteine + H(+). In terms of biological role, catalytic subunit of the TRMT11-TRM112 methyltransferase complex, that specifically mediates the S-adenosyl-L-methionine-dependent N(2)-methylation of guanosine nucleotide at position 10 (m2G10) in tRNAs. This is one of the major tRNA (guanine-N(2))-methyltransferases. The protein is tRNA (guanine(10)-N(2))-methyltransferase TRMT11 of Gallus gallus (Chicken).